We begin with the raw amino-acid sequence, 172 residues long: Protein-export protein SecB (172 aa).

The interval 1 to 22 (MADETSADINNPALQPNGEDTS) is disordered. Positions 7-20 (ADINNPALQPNGED) are enriched in polar residues.

The protein belongs to the SecB family. Homotetramer, a dimer of dimers. One homotetramer interacts with 1 SecA dimer.

The protein localises to the cytoplasm. Its function is as follows. One of the proteins required for the normal export of preproteins out of the cell cytoplasm. It is a molecular chaperone that binds to a subset of precursor proteins, maintaining them in a translocation-competent state. It also specifically binds to its receptor SecA. The protein is Protein-export protein SecB of Sphingopyxis alaskensis (strain DSM 13593 / LMG 18877 / RB2256) (Sphingomonas alaskensis).